We begin with the raw amino-acid sequence, 23 residues long: Maculatin-1.2 (23 aa).

Alanine 23 is subject to Alanine amide.

As to expression, expressed by the skin dorsal glands.

It localises to the secreted. Shows antibacterial activity against S.aureus and S.uberis. In Ranoidea genimaculata (Brown-spotted tree frog), this protein is Maculatin-1.2.